The chain runs to 125 residues: Large ribosomal subunit protein uL22c (125 aa).

It belongs to the universal ribosomal protein uL22 family. As to quaternary structure, part of the 50S ribosomal subunit.

Its subcellular location is the plastid. It is found in the chloroplast. In terms of biological role, this protein binds specifically to 23S rRNA. The globular domain of the protein is located near the polypeptide exit tunnel on the outside of the subunit, while an extended beta-hairpin is found that lines the wall of the exit tunnel in the center of the 70S ribosome. The sequence is that of Large ribosomal subunit protein uL22c (rpl22) from Nuphar advena (Common spatterdock).